The sequence spans 635 residues: Very-long-chain aldehyde decarbonylase GL1-6 (635 aa).

The next 4 membrane-spanning stretches (helical) occupy residues 46 to 66, 100 to 120, 127 to 147, and 183 to 203; these read LLNFMVFPMLLLRLLYGQLWI, IILTALVFYLVSATMPQAQVA, GMVVTAVLHAGPVEFLYYWLH, and VVYFVLLAIPILSTVATGTVS. A Fatty acid hydroxylase domain is found at 139-273; sequence VEFLYYWLHR…MPVYDYIYGT (135 aa).

The protein belongs to the sterol desaturase family. In terms of assembly, homodimer.

The protein resides in the endoplasmic reticulum membrane. The enzyme catalyses a long-chain fatty aldehyde + 2 NADPH + O2 + H(+) = a long-chain alkane + formate + 2 NADP(+) + H2O. Aldehyde decarbonylase involved in the conversion of aldehydes to alkanes. Core component of a very-long-chain alkane synthesis complex. This chain is Very-long-chain aldehyde decarbonylase GL1-6, found in Oryza sativa subsp. indica (Rice).